A 237-amino-acid chain; its full sequence is Immunoglobulin superfamily member 6 (237 aa).

The signal sequence occupies residues Met-1 to Ala-27. Residues Cys-28 to Ser-152 are Extracellular-facing. The 105-residue stretch at Val-30–Gly-134 folds into the Ig-like C2-type domain. A disulfide bond links Cys-51 and Cys-118. A helical membrane pass occupies residues Phe-153–Ile-173. Over Val-174–Ala-237 the chain is Cytoplasmic. The span at Thr-215 to Lys-229 shows a compositional bias: basic and acidic residues. Positions Thr-215 to Ala-237 are disordered.

Ubiquitous with higher expression in immune tissue.

The protein resides in the membrane. The sequence is that of Immunoglobulin superfamily member 6 (Igsf6) from Mus musculus (Mouse).